We begin with the raw amino-acid sequence, 845 residues long: Meiotically up-regulated gene 4 protein (845 aa).

The disordered stretch occupies residues 122-158; that stretch reads LSTTDEQPKEPSIISISSSSSDPSSSPPPSSSLLKTP. The segment covering 132–145 has biased composition (low complexity); sequence PSIISISSSSSDPS. The helical transmembrane segment at 726–746 threads the bilayer; sequence FLVFLTFTGMTLFILYQLTFP.

The protein resides in the membrane. Has a role in meiosis. The protein is Meiotically up-regulated gene 4 protein (mug4) of Schizosaccharomyces pombe (strain 972 / ATCC 24843) (Fission yeast).